The primary structure comprises 246 residues: 14-3-3 protein beta/alpha (246 aa).

The residue at position 1 (Met1) is an N-acetylmethionine; in 14-3-3 protein beta/alpha; alternate. The residue at position 1 (Met1) is an N-acetylmethionine. Position 2 is an N-acetylthreonine; in 14-3-3 protein beta/alpha, N-terminally processed (Thr2). Thr2 is modified (phosphothreonine). Position 5 is an N6-acetyllysine (Lys5). Lys51 is subject to N6-acetyllysine; alternate. Lys51 participates in a covalent cross-link: Glycyl lysine isopeptide (Lys-Gly) (interchain with G-Cter in SUMO2); alternate. Ser60 carries the post-translational modification Phosphoserine. At Lys70 the chain carries N6-acetyllysine. Residues Tyr84 and Tyr106 each carry the 3'-nitrotyrosine modification. An N6-acetyllysine modification is found at Lys117. Ser186 and Ser232 each carry phosphoserine.

The protein belongs to the 14-3-3 family. In terms of assembly, homodimer. Interacts with SAMSN1 and PRKCE. Interacts with AKAP13. Interacts with SSH1 and TORC2/CRTC2. Interacts with ABL1; the interaction results in cytoplasmic location of ABL1 and inhibition of cABL-mediated apoptosis. Interacts with ROR2 (dimer); the interaction results in phosphorylation of YWHAB on tyrosine residues. Interacts with GAB2. Interacts with YAP1 (phosphorylated form). Interacts with the phosphorylated (by AKT1) form of SRPK2. Interacts with PKA-phosphorylated AANAT. Interacts with MYO1C. Interacts with SIRT2. Interacts with the 'Thr-369' phosphorylated form of DAPK2. Interacts with PI4KB, TBC1D22A and TBC1D22B. Interacts with the 'Ser-1134' and 'Ser-1161' phosphorylated form of SOS1. Interacts (via phosphorylated form) with YWHAB; this interaction occurs in a protein kinase AKT1-dependent manner. Interacts with SLITRK1. Interacts with SYNPO2 (phosphorylated form); YWHAB competes with ACTN2 for interaction with SYNPO2. Interacts with RIPOR2 (via phosphorylated form) isoform 2; this interaction occurs in a chemokine-dependent manner and does not compete for binding of RIPOR2 with RHOA nor blocks inhibition of RIPOR2-mediated RHOA activity. Interacts with MARK2 and MARK3. Interacts with TESK1; the interaction is dependent on the phosphorylation of TESK1 'Ser-437' and inhibits TESK1 kinase activity. Interacts with MEFV. Interacts with HDAC4. Interacts with ADAM22 (via C-terminus). As to quaternary structure, (Microbial infection) Interacts with herpes simplex virus 1 protein UL46. (Microbial infection) Probably interacts with Chlamydia trachomatis protein IncG. The alpha, brain-specific form differs from the beta form in being phosphorylated. Phosphorylated on Ser-60 by protein kinase C delta type catalytic subunit in a sphingosine-dependent fashion.

The protein localises to the cytoplasm. It is found in the melanosome. The protein resides in the vacuole membrane. Functionally, adapter protein implicated in the regulation of a large spectrum of both general and specialized signaling pathways. Binds to a large number of partners, usually by recognition of a phosphoserine or phosphothreonine motif. Binding generally results in the modulation of the activity of the binding partner. Negative regulator of osteogenesis. Blocks the nuclear translocation of the phosphorylated form (by AKT1) of SRPK2 and antagonizes its stimulatory effect on cyclin D1 expression resulting in blockage of neuronal apoptosis elicited by SRPK2. Negative regulator of signaling cascades that mediate activation of MAP kinases via AKAP13. In Homo sapiens (Human), this protein is 14-3-3 protein beta/alpha (YWHAB).